We begin with the raw amino-acid sequence, 201 residues long: Probable nicotinate-nucleotide adenylyltransferase (201 aa).

This sequence belongs to the NadD family.

The enzyme catalyses nicotinate beta-D-ribonucleotide + ATP + H(+) = deamido-NAD(+) + diphosphate. It participates in cofactor biosynthesis; NAD(+) biosynthesis; deamido-NAD(+) from nicotinate D-ribonucleotide: step 1/1. Catalyzes the reversible adenylation of nicotinate mononucleotide (NaMN) to nicotinic acid adenine dinucleotide (NaAD). The sequence is that of Probable nicotinate-nucleotide adenylyltransferase from Clostridium botulinum (strain Langeland / NCTC 10281 / Type F).